The following is a 212-amino-acid chain: MKMKTLFLLIKLAKMGAIGKEITVTMRELSRELDVSPQTVLRWLEELKEQGYIHKRESRKGTLVELTEKGINLLEKLYEEISTALYSGFIVGEVISGIGEGAYYVRQYAPLIREYLGFDPYPGTLNVRVLFPKTIFDALCTARPIIIPGFTRNGRTFGDVRAYRVRIDGIEGAIVIPSRTVHPPKIAEIIAPVKLRDALNLKDGDKVRIEVV.

The interval 1–87 (MKMKTLFLLI…YEEISTALYS (87 aa)) is H-T-H motif-like. The interval 88–212 (GFIVGEVISG…DGDKVRIEVV (125 aa)) is riboflavin kinase. 97–102 (GIGEGA) provides a ligand contact to CDP. Mg(2+) is bound by residues Thr-124 and Asn-126. Residues Thr-180 and Glu-188 each contribute to the FMN site. 193–196 (VKLR) is a CDP binding site.

It belongs to the archaeal riboflavin kinase family. The cofactor is Mg(2+).

The catalysed reaction is riboflavin + CTP = CDP + FMN + H(+). The protein operates within cofactor biosynthesis; FMN biosynthesis; FMN from riboflavin (CTP route): step 1/1. Catalyzes the CTP-dependent phosphorylation of riboflavin (vitamin B2) to form flavin mononucleotide (FMN). In Pyrococcus abyssi (strain GE5 / Orsay), this protein is Riboflavin kinase (ribK).